We begin with the raw amino-acid sequence, 339 residues long: Methionine import ATP-binding protein MetN 2 (339 aa).

Positions 2–241 (ISFNNVSKVY…PKTTTTQNFV (240 aa)) constitute an ABC transporter domain. 38–45 (GFSGAGKS) is a binding site for ATP.

This sequence belongs to the ABC transporter superfamily. Methionine importer (TC 3.A.1.24) family. The complex is composed of two ATP-binding proteins (MetN), two transmembrane proteins (MetI) and a solute-binding protein (MetQ).

Its subcellular location is the cell membrane. The catalysed reaction is L-methionine(out) + ATP + H2O = L-methionine(in) + ADP + phosphate + H(+). It catalyses the reaction D-methionine(out) + ATP + H2O = D-methionine(in) + ADP + phosphate + H(+). In terms of biological role, part of the ABC transporter complex MetNIQ involved in methionine import. Responsible for energy coupling to the transport system. This is Methionine import ATP-binding protein MetN 2 from Bacillus anthracis.